Here is a 118-residue protein sequence, read N- to C-terminus: Pterin-4-alpha-carbinolamine dehydratase (118 aa).

This sequence belongs to the pterin-4-alpha-carbinolamine dehydratase family.

The enzyme catalyses (4aS,6R)-4a-hydroxy-L-erythro-5,6,7,8-tetrahydrobiopterin = (6R)-L-erythro-6,7-dihydrobiopterin + H2O. In terms of biological role, involved in tetrahydrobiopterin biosynthesis. Seems to both prevent the formation of 7-pterins and accelerate the formation of quinonoid-BH2. May also have a positive regulatory role in the expression of phhA. This is Pterin-4-alpha-carbinolamine dehydratase (phhB) from Pseudomonas syringae pv. tomato (strain ATCC BAA-871 / DC3000).